The sequence spans 296 residues: Ribosomal RNA small subunit methyltransferase H (296 aa).

Residues 41–43 (GGH), Asp60, Phe87, Asp103, and Gln110 contribute to the S-adenosyl-L-methionine site.

It belongs to the methyltransferase superfamily. RsmH family.

It localises to the cytoplasm. It carries out the reaction cytidine(1402) in 16S rRNA + S-adenosyl-L-methionine = N(4)-methylcytidine(1402) in 16S rRNA + S-adenosyl-L-homocysteine + H(+). Specifically methylates the N4 position of cytidine in position 1402 (C1402) of 16S rRNA. In Synechococcus elongatus (strain ATCC 33912 / PCC 7942 / FACHB-805) (Anacystis nidulans R2), this protein is Ribosomal RNA small subunit methyltransferase H.